Reading from the N-terminus, the 747-residue chain is H(+)/Cl(-) exchange transporter 4 (747 aa).

Residues 1–50 form a required for localization in the endoplasmic reticulum region; sequence MDFLDEPFPDVGTYEDFHTIDWLREKSRDTDRHRKITSKSKESIWEFIKS. Over 1–54 the chain is Cytoplasmic; the sequence is MDFLDEPFPDVGTYEDFHTIDWLREKSRDTDRHRKITSKSKESIWEFIKSLLDA. 2 consecutive transmembrane segments (helical) span residues 55–92 and 138–161; these read WSGW…VCLS and LNYL…VRVF. A Selectivity filter part_1 motif is present at residues 167–171; it reads GSGIP. Ser-168 provides a ligand contact to chloride. Positions 170–177 form an intramembrane region, helical; sequence IPEIKTIL. A run of 2 helical transmembrane segments spans residues 187 to 205 and 211 to 230; these read GKWT…VSSG and EGPL…SLFS. Residues 209-213 carry the Selectivity filter part_2 motif; sequence GKEGP. 2 intramembrane regions (helical) span residues 242–254 and 258–266; these read VLSA…VSVA and PIGGVLFSL. 5 helical membrane-spanning segments follow: residues 278-296, 320-345, 352-372, 429-449, and 454-473; these read LWRS…RSIN, FPFI…AWCR, LGKY…IIAY, MWQL…TFGM, and GLFI…VGIG. The Selectivity filter part_3 motif lies at 454 to 458; the sequence is GLFIP. Residue Phe-456 coordinates chloride. Intramembrane regions (helical) lie at residues 501–515 and 519–530; these read GLYA…LGGV and TVSLVVIMFELT. Residues 531 to 534 constitute an intramembrane region (note=Loop between two helices); it reads GGLE. A helical membrane pass occupies residues 535 to 553; the sequence is YIVPLMAAAVTSKWVADAF. Residues 554-747 lie on the Cytoplasmic side of the membrane; that stretch reads GKEGIYEAHI…NQDPESIIFN (194 aa). Tyr-559 serves as a coordination point for chloride. Residues 587–653 enclose the CBS 1 domain; that stretch reads MRPRRGEPPL…AIKNARQRQE (67 aa). ATP-binding positions include Ser-597 and 618–620; that span reads YNG. A required for localization in the endoplasmic reticulum region spans residues 654–683; that stretch reads GIVSNSIMYFTEEPPELPANSPHPLKLRRI. One can recognise a CBS 2 domain in the interval 684-742; it reads LNLSPFTVTDHTPMETVVDIFRKLGLRQCLVTRSGRLLGIITKKDVLRHMAQMANQDPE. Residue 725–728 participates in ATP binding; sequence TKKD.

It belongs to the chloride channel (TC 2.A.49) family. ClC-4/CLCN4 subfamily. Strongly expressed in liver and brain, but also in heart, muscle, kidney and spleen.

Its subcellular location is the early endosome membrane. It is found in the late endosome membrane. It localises to the endoplasmic reticulum membrane. The protein localises to the lysosome membrane. The protein resides in the recycling endosome membrane. In terms of biological role, strongly outwardly rectifying, electrogenic H(+)/Cl(-)exchanger which mediates the exchange of chloride ions against protons. The CLC channel family contains both chloride channels and proton-coupled anion transporters that exchange chloride or another anion for protons. The presence of conserved gating glutamate residues is typical for family members that function as antiporters. The protein is H(+)/Cl(-) exchange transporter 4 (Clcn4) of Rattus norvegicus (Rat).